We begin with the raw amino-acid sequence, 524 residues long: 2-isopropylmalate synthase (524 aa).

Residues 5 to 267 form the Pyruvate carboxyltransferase domain; that stretch reads VIIFDTTLRD…HTNINHQEIF (263 aa). 4 residues coordinate Mn(2+): D14, H202, H204, and N238. Residues 392 to 524 are regulatory domain; it reads SLDYFSVQSG…SKHQNNQETV (133 aa).

The protein belongs to the alpha-IPM synthase/homocitrate synthase family. LeuA type 1 subfamily. As to quaternary structure, homodimer. It depends on Mn(2+) as a cofactor.

The protein localises to the cytoplasm. The enzyme catalyses 3-methyl-2-oxobutanoate + acetyl-CoA + H2O = (2S)-2-isopropylmalate + CoA + H(+). It functions in the pathway amino-acid biosynthesis; L-leucine biosynthesis; L-leucine from 3-methyl-2-oxobutanoate: step 1/4. Catalyzes the condensation of the acetyl group of acetyl-CoA with 3-methyl-2-oxobutanoate (2-ketoisovalerate) to form 3-carboxy-3-hydroxy-4-methylpentanoate (2-isopropylmalate). This is 2-isopropylmalate synthase from Serratia proteamaculans (strain 568).